The following is a 303-amino-acid chain: Growth/differentiation factor 15 (303 aa).

Residues 1–30 (MAPPALQAQPPGGSQLRFLLFLLLLLLLLS) form the signal peptide. Residues 31–188 (WPSQGDALAM…LRVAAGRGRR (158 aa)) constitute a propeptide that is removed on maturation. A glycan (N-linked (GlcNAc...) asparagine) is linked at Asn-71. 4 cysteine pairs are disulfide-bonded: Cys-198-Cys-205, Cys-206-Cys-269, Cys-235-Cys-300, and Cys-239-Cys-302.

It belongs to the TGF-beta family. In terms of assembly, homodimer; disulfide-linked. Interacts with GFRAL and RET; ligand of GFRAL, which mediates GDF15 internalization and cellular signaling through interaction with RET via the formation of a 2:2:2 ternary complex composed of GDF15, GFRAL and RET. As to expression, detected in plasma (at protein level). Highly expressed in liver. Expressed in the distal small intestine, colon and kidney. Expressed in skeletal muscle in response to mitochondrial stress. Expressed by cardiomyocytes, expression is highly increased in heart diseases. Also detected in subcutaneous fat.

Its subcellular location is the secreted. Its function is as follows. Hormone produced in response to various stresses to confer information about those stresses to the brain, and trigger an aversive response, characterized by nausea and/or loss of appetite. The aversive response is both required to reduce continuing exposure to those stresses at the time of exposure and to promote avoidance behavior in the future. Acts by binding to its receptor, GFRAL, activating GFRAL-expressing neurons localized in the area postrema and nucleus tractus solitarius of the brainstem. It then triggers the activation of neurons localized within the parabrachial nucleus and central amygdala, which constitutes part of the 'emergency circuit' that shapes responses to stressful conditions. The GDF15-GFRAL signal induces expression of genes involved in metabolism, such as lipid metabolism in adipose tissues. Required for avoidance behavior in response to food allergens: induced downstream of mast cell activation to promote aversion and minimize harmful effects of exposure to noxious substances. In addition to suppress appetite, also promotes weight loss by enhancing energy expenditure in muscle: acts by increasing calcium futile cycling in muscle. Contributes to the effect of metformin, an anti-diabetic drug, on appetite reduction and weight loss: produced in the kidney in response to metformin treatment, thereby activating the GDF15-GFRAL response, leading to reduced appetite and weight. Produced in response to anticancer drugs, such as camptothecin or cisplatin, promoting nausea and contributing to malnutrition. Overproduced in many cancers, promoting anorexia in cancer (cachexia). Responsible for the risk of nausea during pregnancy: high levels of GDF15 during pregnancy, mostly originating from embryos, are associated with increased nausea. Maternal sensitivity to nausea is probably determined by pre-pregnancy exposure to GDF15, females with naturally high level of GDF15 being less susceptible to nausea than female mice with low levels of GDF15 before pregnancy. Promotes metabolic adaptation in response to systemic inflammation caused by bacterial and viral infections in order to promote tissue tolerance and prevent tissue damage. Required for tissue tolerance in response to myocardial infarction by acting as an inhibitor of leukocyte integring activation, thereby protecting against cardiac rupture. Inhibits growth hormone signaling on hepatocytes. This is Growth/differentiation factor 15 from Mus musculus (Mouse).